Here is a 31-residue protein sequence, read N- to C-terminus: Cytochrome b6-f complex subunit 6 (31 aa).

Residues 4–24 form a helical membrane-spanning segment; that stretch reads ITSYFGFLLAALTITSALFIG.

The protein belongs to the PetL family. As to quaternary structure, the 4 large subunits of the cytochrome b6-f complex are cytochrome b6, subunit IV (17 kDa polypeptide, PetD), cytochrome f and the Rieske protein, while the 4 small subunits are PetG, PetL, PetM and PetN. The complex functions as a dimer.

The protein localises to the plastid. Its subcellular location is the chloroplast thylakoid membrane. Component of the cytochrome b6-f complex, which mediates electron transfer between photosystem II (PSII) and photosystem I (PSI), cyclic electron flow around PSI, and state transitions. PetL is important for photoautotrophic growth as well as for electron transfer efficiency and stability of the cytochrome b6-f complex. This Gossypium hirsutum (Upland cotton) protein is Cytochrome b6-f complex subunit 6.